Consider the following 485-residue polypeptide: Ataxin-10 (485 aa).

It belongs to the ataxin-10 family.

The protein localises to the cytoplasm. The protein resides in the perinuclear region. Its subcellular location is the midbody. May play a role in the regulation of cytokinesis. May play a role in signaling by stimulating protein glycosylation. Induces neuritogenesis by activating the Ras-MAP kinase pathway and is necessary for the survival of cerebellar neurons. Does not appear to play a major role in ciliogenesis. The chain is Ataxin-10 (atxn10) from Xenopus tropicalis (Western clawed frog).